The chain runs to 127 residues: Large ribosomal subunit protein bL20 (127 aa).

Belongs to the bacterial ribosomal protein bL20 family.

Binds directly to 23S ribosomal RNA and is necessary for the in vitro assembly process of the 50S ribosomal subunit. It is not involved in the protein synthesizing functions of that subunit. The chain is Large ribosomal subunit protein bL20 from Bifidobacterium animalis subsp. lactis (strain AD011).